Here is a 350-residue protein sequence, read N- to C-terminus: Dihydroorotase (350 aa).

H17 and H19 together coordinate Zn(2+). Residues 19–21 (HLR) and N45 each bind substrate. Residues K103, H140, and H178 each coordinate Zn(2+). Residue K103 is modified to N6-carboxylysine. H140 serves as a coordination point for substrate. Substrate is bound at residue L223. D251 lines the Zn(2+) pocket. The active site involves D251. H255 and A267 together coordinate substrate.

This sequence belongs to the metallo-dependent hydrolases superfamily. DHOase family. Class II DHOase subfamily. As to quaternary structure, homodimer. Zn(2+) serves as cofactor.

It catalyses the reaction (S)-dihydroorotate + H2O = N-carbamoyl-L-aspartate + H(+). The protein operates within pyrimidine metabolism; UMP biosynthesis via de novo pathway; (S)-dihydroorotate from bicarbonate: step 3/3. Its function is as follows. Catalyzes the reversible cyclization of carbamoyl aspartate to dihydroorotate. This Erwinia tasmaniensis (strain DSM 17950 / CFBP 7177 / CIP 109463 / NCPPB 4357 / Et1/99) protein is Dihydroorotase.